Consider the following 459-residue polypeptide: uncharacterized protein (459 aa).

12 helical membrane passes run 25–45, 52–72, 95–115, 123–143, 167–187, 192–212, 249–269, 279–299, 310–330, 332–352, 389–409, and 420–440; these read SYGF…IYLL, AGIP…FAAI, PYLL…FLSP, LIYA…VNIP, IGSL…LVKF, VGYP…FYIC, VLMT…LVYF, LMAY…VFLP, TAMI…MLPS, VYVF…PNGI, SLSG…PNAV, and ALLL…IGFL.

It belongs to the sodium:galactoside symporter (TC 2.A.2) family.

The protein resides in the cell membrane. This is an uncharacterized protein from Bacillus subtilis (strain 168).